A 152-amino-acid chain; its full sequence is UPF0266 membrane protein YobD (152 aa).

The next 3 helical transmembrane spans lie at 6-26, 45-65, and 67-87; these read LVLI…QFIM, IDSV…VTNH, and ALIT…IFWI.

This sequence belongs to the UPF0266 family.

It localises to the cell inner membrane. This is UPF0266 membrane protein YobD from Shigella dysenteriae serotype 1 (strain Sd197).